The chain runs to 352 residues: Ion-translocating oxidoreductase complex subunit D (352 aa).

5 helical membrane-spanning segments follow: residues 20–40 (IMLLVLLAAVPGIAAQLRFFG), 42–62 (GTLVQILLASVSALLAEALVL), 78–109 (ALLTGLLLAVSIPPLAPWWMVVLGTVFAVIIA), 123–143 (PAMIGYVVLLISFPVQMTSWL), and 148–168 (IAVNIPGFIDAIQVIFSGHTA). Residue threonine 187 is modified to FMN phosphoryl threonine. Transmembrane regions (helical) follow at residues 214 to 234 (ILAGAGWQWVNLAWLAGGVWL), 242 to 262 (WHIPLSFLVTLALCATLGWLF), 267 to 287 (LAAPQIHLLSGATMLGAFFIL), and 301 to 318 (LMFGALAGLLVWLIRSFG).

The protein belongs to the NqrB/RnfD family. The complex is composed of six subunits: RsxA, RsxB, RsxC, RsxD, RsxE and RsxG. FMN is required as a cofactor.

It localises to the cell inner membrane. Its function is as follows. Part of a membrane-bound complex that couples electron transfer with translocation of ions across the membrane. Required to maintain the reduced state of SoxR. This Shigella flexneri protein is Ion-translocating oxidoreductase complex subunit D.